The sequence spans 187 residues: ATP synthase subunit b 2 (187 aa).

Residues 1 to 25 (MAESHGGAKGPAAGAHTGAEGGHGG) are disordered. Residues 39–59 (LVSLAIFFVVLYVIVSKLALP) traverse the membrane as a helical segment. A disordered region spans residues 103–122 (RAQAIGNESRDKANAQAETE). The span at 110 to 122 (ESRDKANAQAETE) shows a compositional bias: basic and acidic residues.

This sequence belongs to the ATPase B chain family. As to quaternary structure, F-type ATPases have 2 components, F(1) - the catalytic core - and F(0) - the membrane proton channel. F(1) has five subunits: alpha(3), beta(3), gamma(1), delta(1), epsilon(1). F(0) has three main subunits: a(1), b(2) and c(10-14). The alpha and beta chains form an alternating ring which encloses part of the gamma chain. F(1) is attached to F(0) by a central stalk formed by the gamma and epsilon chains, while a peripheral stalk is formed by the delta and b chains.

The protein resides in the cell inner membrane. Its function is as follows. F(1)F(0) ATP synthase produces ATP from ADP in the presence of a proton or sodium gradient. F-type ATPases consist of two structural domains, F(1) containing the extramembraneous catalytic core and F(0) containing the membrane proton channel, linked together by a central stalk and a peripheral stalk. During catalysis, ATP synthesis in the catalytic domain of F(1) is coupled via a rotary mechanism of the central stalk subunits to proton translocation. In terms of biological role, component of the F(0) channel, it forms part of the peripheral stalk, linking F(1) to F(0). The b'-subunit is a diverged and duplicated form of b found in plants and photosynthetic bacteria. The chain is ATP synthase subunit b 2 (atpF2) from Bradyrhizobium diazoefficiens (strain JCM 10833 / BCRC 13528 / IAM 13628 / NBRC 14792 / USDA 110).